The sequence spans 773 residues: 4'-phosphopantetheine phosphatase (773 aa).

Ala2 is modified (N-acetylalanine). A pantothenate kinase region spans residues 2–402 (AECRASGGGS…APELCPTQRA (401 aa)). The acetyl-CoA site is built by Ser196 and Ser199. A 3'-nitrotyrosine modification is found at Tyr320. Residues 403–773 (RSGTFDLLEM…VIFKYEVPAE (371 aa)) form a 4'-phosphopantetheine phosphatase region. Position 404 is a phosphoserine (Ser404). Thr406 bears the Phosphothreonine mark. Asp623, Asn624, and Asp659 together coordinate Mn(2+). The Subfamily II EGMGR motif signature appears at 724–728 (EGMGR).

It in the N-terminal section; belongs to the type II pantothenate kinase family. The protein in the C-terminal section; belongs to the damage-control phosphatase family. Phosphopantetheine phosphatase (II) subfamily. In terms of assembly, homodimer. Interacts with PKM. It depends on Mn(2+) as a cofactor. Ni(2+) is required as a cofactor.

The protein resides in the cytoplasm. The catalysed reaction is (R)-4'-phosphopantetheine + H2O = (R)-pantetheine + phosphate. The enzyme catalyses (R)-4'-phosphopantetheine sulfonate + H2O = (R)-pantetheine sulfonate + phosphate. It catalyses the reaction (R)-4'-phospho-S-sulfopantetheine + H2O = (R)-S-sulfopantetheine + phosphate. With respect to regulation, activity is strongly promoted by Co(2+), Ni(2+), Mg(2+) and Mn(2+). Activity is inhibited by EDTA. Phosphatase which shows a preference for 4'-phosphopantetheine and its oxidatively damaged forms (sulfonate or S-sulfonate), providing strong indirect evidence that the phosphatase activity pre-empts damage in the coenzyme A (CoA) pathway. Hydrolyzing excess 4'-phosphopantetheine could constitute a directed overflow mechanism to prevent its oxidation to the S-sulfonate, sulfonate, or other forms. Hydrolyzing 4'-phosphopantetheine sulfonate or S-sulfonate would forestall their conversion to inactive forms of CoA and acyl carrier protein. May play a role in the physiological regulation of CoA intracellular levels. This Rattus norvegicus (Rat) protein is 4'-phosphopantetheine phosphatase.